The chain runs to 184 residues: uncharacterized protein (184 aa).

This sequence to M.tuberculosis Rv0487.

This is an uncharacterized protein from Mycobacterium leprae (strain TN).